The sequence spans 483 residues: Jacalin-related lectin 13 (483 aa).

The tract at residues 1–20 is disordered; it reads MTQKLESVGSERKSSEYMWD. Jacalin-type lectin domains lie at 2–147, 150–295, and 307–461; these read TQKL…YVTW, PARM…YFTT, and FREK…YFFP.

This sequence belongs to the jacalin lectin family.

The sequence is that of Jacalin-related lectin 13 (JAL13) from Arabidopsis thaliana (Mouse-ear cress).